The chain runs to 165 residues: Endoribonuclease YbeY (165 aa).

The Zn(2+) site is built by histidine 130, histidine 134, and histidine 140.

The protein belongs to the endoribonuclease YbeY family. It depends on Zn(2+) as a cofactor.

The protein resides in the cytoplasm. Single strand-specific metallo-endoribonuclease involved in late-stage 70S ribosome quality control and in maturation of the 3' terminus of the 16S rRNA. In Streptococcus pneumoniae serotype 4 (strain ATCC BAA-334 / TIGR4), this protein is Endoribonuclease YbeY.